A 575-amino-acid chain; its full sequence is MSNGQLIYLMVAIAVILVLAYVVAIFLRKRNEGRLEALEERKEELYNLPVNDEVEAVKNMHLIGQSQVAFREWNQKWVDLSLNSFADIENNLFEAEGYNHSFRFLKASHQIDQIESQITLIEEDIAAIRNALADLEKQESKNSGRVLHALDLFEELQHRVAENSEQYGQALDEIEKQLENIQSEFSQFVTLNSSGDPVEAAVILDNTENHILALSHIVDRVPALVTTLSTELPDQLQDLEAGYRKLIDANYHFVETDIEARFHLLYEAFKKNQENIRQLELDNAEYENGQAQEEINALYDIFTREIAAQKVVENLLATLPTYLQHMKENNTLLGEDIARLNKTYLLPETAASHVRRIQTELESFEAAIVEVTSNQEEPTQAYSVLEENLEDLQTQLKDIEDEQISVSERLTQIEKDDINARQKANVYVNRLHTIKRYMEKRNLPGIPQTFLKLFFTASNNTEDLMVELEQKMINIESVTRVLEIATNDMEALETETYNIVQYATLTEQLLQYSNRYRSFDERIQEAFNEALDIFEKEFDYHASFDKISQALEVAEPGVTNRFVTSYEKTRETIRF.

Topologically, residues methionine 1–tyrosine 8 are extracellular. Residues leucine 9–leucine 27 traverse the membrane as a helical segment. The Cytoplasmic segment spans residues arginine 28–phenylalanine 575. Coiled coils occupy residues leucine 105–leucine 191, leucine 265–isoleucine 301, valine 354–aspartate 416, and threonine 456–alanine 526.

Belongs to the EzrA family.

It is found in the cell membrane. Its function is as follows. Negative regulator of FtsZ ring formation; modulates the frequency and position of FtsZ ring formation. Inhibits FtsZ ring formation at polar sites. Interacts either with FtsZ or with one of its binding partners to promote depolymerization. This Streptococcus pneumoniae (strain ATCC BAA-255 / R6) protein is Septation ring formation regulator EzrA.